The chain runs to 619 residues: 2-succinyl-5-enolpyruvyl-6-hydroxy-3-cyclohexene-1-carboxylate synthase (619 aa).

Over residues serine 385–serine 398 the composition is skewed to polar residues. The disordered stretch occupies residues serine 385 to serine 415. Residues serine 399–asparagine 413 show a composition bias toward acidic residues.

It belongs to the TPP enzyme family. MenD subfamily. Homodimer. Requires Mg(2+) as cofactor. The cofactor is Mn(2+). It depends on thiamine diphosphate as a cofactor.

The catalysed reaction is isochorismate + 2-oxoglutarate + H(+) = 5-enolpyruvoyl-6-hydroxy-2-succinyl-cyclohex-3-ene-1-carboxylate + CO2. It participates in quinol/quinone metabolism; 1,4-dihydroxy-2-naphthoate biosynthesis; 1,4-dihydroxy-2-naphthoate from chorismate: step 2/7. The protein operates within quinol/quinone metabolism; menaquinone biosynthesis. Functionally, catalyzes the thiamine diphosphate-dependent decarboxylation of 2-oxoglutarate and the subsequent addition of the resulting succinic semialdehyde-thiamine pyrophosphate anion to isochorismate to yield 2-succinyl-5-enolpyruvyl-6-hydroxy-3-cyclohexene-1-carboxylate (SEPHCHC). The protein is 2-succinyl-5-enolpyruvyl-6-hydroxy-3-cyclohexene-1-carboxylate synthase of Haloquadratum walsbyi (strain DSM 16790 / HBSQ001).